We begin with the raw amino-acid sequence, 490 residues long: NAD/NADP-dependent betaine aldehyde dehydrogenase (490 aa).

The K(+) site is built by Thr26, Ile27, and Asp93. 150–153 serves as a coordination point for NADPH; that stretch reads GAWN. Catalysis depends on Lys162, which acts as the Charge relay system. 176–179 contacts NADPH; sequence KPSE. Val180 lines the K(+) pocket. Residues Gly209 and 230–233 each bind NADPH; that span reads GTST. Leu246 provides a ligand contact to K(+). Glu252 (proton acceptor) is an active-site residue. Cys286 and Glu387 together coordinate NADPH. Residue Cys286 is the Nucleophile of the active site. At Cys286 the chain carries Cysteine sulfenic acid (-SOH). The K(+) site is built by Lys457 and Gly460. Catalysis depends on Glu464, which acts as the Charge relay system.

Belongs to the aldehyde dehydrogenase family. In terms of assembly, dimer of dimers. K(+) is required as a cofactor.

The catalysed reaction is betaine aldehyde + NAD(+) + H2O = glycine betaine + NADH + 2 H(+). It catalyses the reaction betaine aldehyde + NADP(+) + H2O = glycine betaine + NADPH + 2 H(+). Its pathway is amine and polyamine biosynthesis; betaine biosynthesis via choline pathway; betaine from betaine aldehyde: step 1/1. Functionally, involved in the biosynthesis of the osmoprotectant glycine betaine. Catalyzes the irreversible oxidation of betaine aldehyde to the corresponding acid. In P.aeruginosa this reaction is a compulsory step in the assimilation of carbon and nitrogen when bacteria are growing in choline or choline precursors. Can use NADP(+) with similar efficiency to NAD(+), a property that can be used by the bacterium to produce the NADPH needed to combat the oxidative stress imposed by the host defenses. The chain is NAD/NADP-dependent betaine aldehyde dehydrogenase from Pseudomonas aeruginosa (strain ATCC 15692 / DSM 22644 / CIP 104116 / JCM 14847 / LMG 12228 / 1C / PRS 101 / PAO1).